The following is a 664-amino-acid chain: Glycine--tRNA ligase beta subunit (664 aa).

Belongs to the class-II aminoacyl-tRNA synthetase family. Tetramer of two alpha and two beta subunits.

The protein resides in the cytoplasm. It carries out the reaction tRNA(Gly) + glycine + ATP = glycyl-tRNA(Gly) + AMP + diphosphate. The polypeptide is Glycine--tRNA ligase beta subunit (Rickettsia felis (strain ATCC VR-1525 / URRWXCal2) (Rickettsia azadi)).